Reading from the N-terminus, the 216-residue chain is Probable nicotinate-nucleotide adenylyltransferase (216 aa).

This sequence belongs to the NadD family.

It carries out the reaction nicotinate beta-D-ribonucleotide + ATP + H(+) = deamido-NAD(+) + diphosphate. The protein operates within cofactor biosynthesis; NAD(+) biosynthesis; deamido-NAD(+) from nicotinate D-ribonucleotide: step 1/1. Functionally, catalyzes the reversible adenylation of nicotinate mononucleotide (NaMN) to nicotinic acid adenine dinucleotide (NaAD). This chain is Probable nicotinate-nucleotide adenylyltransferase, found in Geobacter sp. (strain M21).